A 212-amino-acid polypeptide reads, in one-letter code: Probable plastid-lipid-associated protein 11, chloroplastic (212 aa).

The transit peptide at 1 to 25 (MALALSLSACSPPLRRTRRAGFRTS) directs the protein to the chloroplast.

The protein belongs to the PAP/fibrillin family.

The protein resides in the plastid. The protein localises to the chloroplast thylakoid. In Arabidopsis thaliana (Mouse-ear cress), this protein is Probable plastid-lipid-associated protein 11, chloroplastic (PAP11).